Consider the following 193-residue polypeptide: Probable gluconokinase (193 aa).

21 to 28 (GPAGSGKT) contributes to the ATP binding site.

Belongs to the gluconokinase GntK/GntV family.

The catalysed reaction is D-gluconate + ATP = 6-phospho-D-gluconate + ADP + H(+). The protein operates within carbohydrate acid metabolism; D-gluconate degradation. This is Probable gluconokinase from Schizosaccharomyces pombe (strain 972 / ATCC 24843) (Fission yeast).